The sequence spans 246 residues: Pyruvate formate-lyase 1-activating enzyme (246 aa).

Residues 16–239 (VDGPGIRFIT…MERVKGILEQ (224 aa)) enclose the Radical SAM core domain. Positions 30, 34, and 37 each coordinate [4Fe-4S] cluster. S-adenosyl-L-methionine contacts are provided by residues 36 to 38 (YCH), G79, 130 to 132 (DLK), and H203.

The protein belongs to the organic radical-activating enzymes family. It depends on [4Fe-4S] cluster as a cofactor.

Its subcellular location is the cytoplasm. The enzyme catalyses glycyl-[formate C-acetyltransferase] + reduced [flavodoxin] + S-adenosyl-L-methionine = glycin-2-yl radical-[formate C-acetyltransferase] + semiquinone [flavodoxin] + 5'-deoxyadenosine + L-methionine + H(+). Its function is as follows. Activation of pyruvate formate-lyase 1 under anaerobic conditions by generation of an organic free radical, using S-adenosylmethionine and reduced flavodoxin as cosubstrates to produce 5'-deoxy-adenosine. The sequence is that of Pyruvate formate-lyase 1-activating enzyme (pflA) from Escherichia coli O157:H7.